The following is a 198-amino-acid chain: Peptidyl-tRNA hydrolase (198 aa).

TRNA is bound at residue Tyr-18. His-23 (proton acceptor) is an active-site residue. Residues Tyr-69, Asn-71, and Asn-117 each contribute to the tRNA site.

It belongs to the PTH family. As to quaternary structure, monomer.

It localises to the cytoplasm. It catalyses the reaction an N-acyl-L-alpha-aminoacyl-tRNA + H2O = an N-acyl-L-amino acid + a tRNA + H(+). Its function is as follows. Hydrolyzes ribosome-free peptidyl-tRNAs (with 1 or more amino acids incorporated), which drop off the ribosome during protein synthesis, or as a result of ribosome stalling. Catalyzes the release of premature peptidyl moieties from peptidyl-tRNA molecules trapped in stalled 50S ribosomal subunits, and thus maintains levels of free tRNAs and 50S ribosomes. The polypeptide is Peptidyl-tRNA hydrolase (Aeromonas hydrophila subsp. hydrophila (strain ATCC 7966 / DSM 30187 / BCRC 13018 / CCUG 14551 / JCM 1027 / KCTC 2358 / NCIMB 9240 / NCTC 8049)).